A 279-amino-acid chain; its full sequence is uncharacterized protein (279 aa).

The segment at 136–279 is disordered; sequence TSNATEASEK…FTSDSSDEED (144 aa). Positions 228–238 are enriched in low complexity; it reads NNGNGAVYSDS.

This is an uncharacterized protein from Invertebrate iridescent virus 3 (IIV-3).